The primary structure comprises 1073 residues: Probable inorganic carbon transporter subunit DabA (1073 aa).

Zn(2+) contacts are provided by Cys551, Asp553, His742, and Cys757.

It belongs to the inorganic carbon transporter (TC 9.A.2) DabA family. As to quaternary structure, forms a complex with DabB. Zn(2+) is required as a cofactor.

It localises to the cell inner membrane. Functionally, part of an energy-coupled inorganic carbon pump. This chain is Probable inorganic carbon transporter subunit DabA, found in Methylococcus capsulatus (strain ATCC 33009 / NCIMB 11132 / Bath).